The following is a 120-amino-acid chain: UPF0231 protein YacL (120 aa).

This sequence belongs to the UPF0231 family.

This chain is UPF0231 protein YacL, found in Salmonella heidelberg (strain SL476).